We begin with the raw amino-acid sequence, 94 residues long: Conotoxin Cal22a (94 aa).

Residues 1 to 24 (MMSTKGITLFLCLLLLALATSVNG) form the signal peptide. Residues 25–44 (GQGTRRSRMTRALHGGRPSA) constitute a propeptide that is removed on maturation.

Post-translationally, contains 4 disulfide bonds. Expressed by the venom duct.

It is found in the secreted. Probable neurotoxin with unknown target. Possibly targets ion channels. In Californiconus californicus (California cone), this protein is Conotoxin Cal22a.